We begin with the raw amino-acid sequence, 112 residues long: MKKIEAIIKPFKLDEVKDALVEIGIGGMTVTEVKGFGQQKGHTEIYRGTEYVIDFLPKVKIEVVVRDEDVEKVVETIVKTAQTGRVGDGKIFIIPVEDVIRIRTGERGEQAI.

The residue at position 51 (Y51) is an O-UMP-tyrosine.

Belongs to the P(II) protein family. As to quaternary structure, homotrimer.

In terms of biological role, in nitrogen-limiting conditions, when the ratio of Gln to 2-ketoglutarate decreases, P-II is uridylylated to P-II-UMP. P-II-UMP allows the deadenylation of glutamine synthetase (GS), thus activating the enzyme. Conversely, in nitrogen excess P-II is deuridylated and promotes the adenylation of GS. P-II indirectly controls the transcription of the GS gene (glnA). P-II prevents NR-II-catalyzed conversion of NR-I to NR-I-phosphate, the transcriptional activator of glnA. When P-II is uridylylated to P-II-UMP, these events are reversed. The chain is Nitrogen regulatory protein P-II (glnB) from Aquifex aeolicus (strain VF5).